The sequence spans 269 residues: Diphthine synthase (269 aa).

Residues Leu10, Asp87, Val90, 115 to 116 (SI), Leu166, Ala209, and His234 contribute to the S-adenosyl-L-methionine site.

Belongs to the diphthine synthase family. As to quaternary structure, homodimer.

It catalyses the reaction 2-[(3S)-amino-3-carboxypropyl]-L-histidyl-[translation elongation factor 2] + 3 S-adenosyl-L-methionine = diphthine-[translation elongation factor 2] + 3 S-adenosyl-L-homocysteine + 3 H(+). Its pathway is protein modification; peptidyl-diphthamide biosynthesis. S-adenosyl-L-methionine-dependent methyltransferase that catalyzes the trimethylation of the amino group of the modified target histidine residue in translation elongation factor 2 (EF-2), to form an intermediate called diphthine. The three successive methylation reactions represent the second step of diphthamide biosynthesis. This is Diphthine synthase from Pyrococcus furiosus (strain ATCC 43587 / DSM 3638 / JCM 8422 / Vc1).